We begin with the raw amino-acid sequence, 272 residues long: uncharacterized protein (272 aa).

Active-site residues include D71 and E163.

The protein belongs to the glycosyl hydrolase 25 family.

This is an uncharacterized protein from Escherichia coli O6:H1 (strain CFT073 / ATCC 700928 / UPEC).